A 461-amino-acid chain; its full sequence is MLKIFNTLTRQKEEFKPIHAGEVGMYVCGITVYDLCHIGHGRTFVAFDVVARYLRFLGYKLKYVRNITDIDDKIIKRANENGESFVALVDRMIAEMHKDFDALNILRPDMEPRATHHIAEIIELTEQLIAKGHAYVADNGDVMFDVPTDPTYGVLSRQDLDQLQAGARVDVVDDKRNPMDFVLWKMSKEGEPSWPSPWGPGRPGWHIECSAMNCKQLGNHFDIHGGGSDLMFPHHENEIAQSTCAHDGQYVNYWMHSGMVMVDREKMSKSLGNFFTVRDVLKYYDAETVRYFLMSGHYRSQLNYSEENLKQARAALERLYTALRGTDKTVAPAGGEAFEARFIEAMDDDFNTPEAYSVLFDMAREVNRLKAEDMAAANAMASHLRKLSSVLGLLEQEPEAFLQSGAQADDSEVAEIEALIQQRLDARKAKDWAAADAARDRLNEMGIVLEDGPQGTTWRRK.

Cys28 contacts Zn(2+). The 'HIGH' region motif lies at 30–40 (ITVYDLCHIGH). Cys209, His234, and Glu238 together coordinate Zn(2+). Positions 266–270 (KMSKS) match the 'KMSKS' region motif. Position 269 (Lys269) interacts with ATP.

It belongs to the class-I aminoacyl-tRNA synthetase family. Monomer. Zn(2+) serves as cofactor.

Its subcellular location is the cytoplasm. It carries out the reaction tRNA(Cys) + L-cysteine + ATP = L-cysteinyl-tRNA(Cys) + AMP + diphosphate. This Escherichia coli O17:K52:H18 (strain UMN026 / ExPEC) protein is Cysteine--tRNA ligase.